We begin with the raw amino-acid sequence, 612 residues long: Baeyer-Villiger monooxygenase 4 (612 aa).

Residues Glu99, 107 to 110 (TWYW), Asp119, Tyr125, and Ala169 contribute to the FAD site. 117–119 (QCD) is a binding site for NADP(+). Residues 253 to 259 (TGATGVQ), 276 to 277 (RT), and 393 to 394 (KR) each bind NADP(+).

The protein belongs to the FAD-binding monooxygenase family. FAD is required as a cofactor.

Its function is as follows. Catalyzes a Baeyer-Villiger oxidation reaction, i.e. the insertion of an oxygen atom into a carbon-carbon bond adjacent to a carbonyl, which converts ketones to esters or lactones using NADPH as an electron donor. Has a broad substrate scope and oxidizes different compounds including substituted and unsubstituted alicyclic, bicyclic-, aliphatic-ketones, ketones with an aromatic moiety, and sulfides. The highest activities are measured for 2- and 3-methylcyclohexanone, phenylacetone, bicyclo[3.2.0]hept-2-en-6-one and menthone. Cannot use NADH instead of NADPH. Is not active on benzaldehyde. The sequence is that of Baeyer-Villiger monooxygenase 4 from Dietzia sp. (strain D5).